The primary structure comprises 832 residues: G-type lectin S-receptor-like serine/threonine-protein kinase RLK1 (832 aa).

An N-terminal signal peptide occupies residues 1 to 24 (MGSLSCSIIHLVLILQLQTFFVFS). Residues 25–461 (QNIRNGSVPV…VPVTGNRAKK (437 aa)) are Extracellular-facing. Asn-29, Asn-92, Asn-100, Asn-178, Asn-240, and Asn-251 each carry an N-linked (GlcNAc...) asparagine glycan. The 121-residue stretch at 37-157 (SLTASESQQI…GSEDSDEVLW (121 aa)) folds into the Bulb-type lectin domain. Residues 299-349 (RDNMCSPDDALGNMACGYNNICSLGNNKRPKCECPERFVLKDPSNEYGDCL) form the EGF-like; atypical domain. Cystine bridges form between Cys-303–Cys-320, Cys-314–Cys-330, and Cys-332–Cys-348. The 90-residue stretch at 357–446 (CRPENQTANS…DSDTFIKVRN (90 aa)) folds into the PAN domain. Asn-361 carries N-linked (GlcNAc...) asparagine glycosylation. Cystine bridges form between Cys-397–Cys-420 and Cys-401–Cys-407. Asn-446 carries an N-linked (GlcNAc...) asparagine glycan. A helical transmembrane segment spans residues 462–482 (LDWLIIACSVLLGTSAFVIFD). At 483–832 (TSCSYRKTKK…SLSSDPVSLV (350 aa)) the chain is on the cytoplasmic side. In terms of domain architecture, Protein kinase spans 531–803 (RDFTEELGRG…NVTQMLEGVI (273 aa)). Residues 537-545 (LGRGAFGIV) and Lys-563 each bind ATP. The tract at residues 622–638 (RRPRPSWEDRKNIAVAI) is caM-binding. Residue Asp-657 is the Proton acceptor of the active site.

This sequence belongs to the protein kinase superfamily. Ser/Thr protein kinase family.

It localises to the cell membrane. It carries out the reaction L-seryl-[protein] + ATP = O-phospho-L-seryl-[protein] + ADP + H(+). It catalyses the reaction L-threonyl-[protein] + ATP = O-phospho-L-threonyl-[protein] + ADP + H(+). This is G-type lectin S-receptor-like serine/threonine-protein kinase RLK1 (RLK1) from Arabidopsis thaliana (Mouse-ear cress).